The sequence spans 1427 residues: Coiled-coil domain-containing protein 144A (1427 aa).

A compositionally biased stretch (basic and acidic residues) spans 1–11; the sequence is MASWGGEKRGG. Disordered regions lie at residues 1–32, 87–189, 213–261, 453–485, and 528–586; these read MASW…VGSQ, AARS…LTER, LPEN…CDRE, NMNQ…DSDR, and EEEM…EVKN. 2 stretches are compositionally biased toward polar residues: residues 129–150 and 167–178; these read PESL…LSDE and VSPSMPENQSAT. The span at 224–234 shows a compositional bias: acidic residues; sequence QDSELTSEEEQ. Polar residues predominate over residues 453–467; the sequence is NMNQNSDSGSTNNYK. A coiled-coil region spans residues 490 to 545; it reads YLHEELQQDMQKFKNEVNTLEEEFLALKKEDVQLHKDVEEEMEKHRSNSTELSGTL. Basic and acidic residues predominate over residues 528 to 537; it reads EEEMEKHRSN. Residues 543–552 are compositionally biased toward low complexity; the sequence is GTLTDGTTVG. The segment covering 563–584 has biased composition (basic and acidic residues); that stretch reads PRKENGEHDRPADKTSNEKNEV. Coiled-coil stretches lie at residues 648–1129 and 1155–1309; these read LLKL…DLTE and FSMK…TQLT.

Belongs to the CCDC144 family.

Its function is as follows. May play a role in preventing the formation of kidney stones through inhibition of calcium oxalate monohydrate (COM) crystallization, attenuating COM-induced apoptotic injury to renal epithelial cells. May exhibit antilithiatic (preventing the formation of kidney stones) activity through crystal binding, hindering the crystal attachment to renal epithelial cells, a pre-requisite to initiate inflammatory response. The sequence is that of Coiled-coil domain-containing protein 144A (CCDC144A) from Homo sapiens (Human).